Reading from the N-terminus, the 447-residue chain is Crotonyl-CoA reductase (447 aa).

Belongs to the zinc-containing alcohol dehydrogenase family. Crotonyl-CoA carboxylase/reductase subfamily. As to quaternary structure, homodimer.

It catalyses the reaction butanoyl-CoA + NADP(+) = (2E)-butenoyl-CoA + NADPH + H(+). With respect to regulation, inhibited by divalent cations (30-100%), beta-chloromercuribenzoate (85%), iodoacetamide (40%) and N-ethylmaleamide (80%). The presence of CoA thioesters containing 12-20 carbon atoms results in inhibition of enzyme activity. The greatest degree of inhibition is observed in the presence of palmitoyl-CoA and myristoyl-CoA. The branched-chain fatty acids, isopalmitoyl-CoA and isomyristoyl-CoA are less effective inhibitors of the crotonyl-CoA reductase. Concentrations of NADPH above 200 uM lead to inhibition of enzyme activity. In terms of biological role, may play a role in supplying butyryl-CoA for straight-chain fatty acid biosynthesis. Catalyzes the conversion of crotonyl-CoA to butyryl-CoA. It shows a high substrate specificity for crotonyl-CoA, a short-chain-length (C4), but no measurable activity is observed with shorter (C3) or longer-chain-length enoyl-CoA thioesters. In Streptomyces collinus, this protein is Crotonyl-CoA reductase (ccr).